A 162-amino-acid chain; its full sequence is Ribose-5-phosphate isomerase B (162 aa).

Residues 11–12 (DH) and 70–74 (GSGNG) contribute to the D-ribulose 5-phosphate site. Residue Glu-75 is the Proton acceptor of the active site. The active-site Proton donor is the His-102. 4 residues coordinate D-ribulose 5-phosphate: Asn-103, Arg-113, Arg-137, and Arg-141.

Belongs to the LacAB/RpiB family. Homodimer.

The enzyme catalyses aldehydo-D-ribose 5-phosphate = D-ribulose 5-phosphate. It functions in the pathway carbohydrate degradation; pentose phosphate pathway; D-ribose 5-phosphate from D-ribulose 5-phosphate (non-oxidative stage): step 1/1. Its function is as follows. Catalyzes the interconversion of ribulose-5-P and ribose-5-P. This is Ribose-5-phosphate isomerase B from Mycobacterium leprae (strain TN).